The sequence spans 503 residues: Intracellular exo-alpha-(1-&gt;5)-L-arabinofuranosidase (503 aa).

Alpha-L-arabinofuranose contacts are provided by E27, N72, and N172. The active-site Proton donor/acceptor is the E173. Residues Y244, E292, and Q352 each contribute to the alpha-L-arabinofuranose site. E292 functions as the Nucleophile in the catalytic mechanism.

Belongs to the glycosyl hydrolase 51 family. In terms of assembly, homohexamer; trimer of dimers.

Its subcellular location is the cytoplasm. It carries out the reaction Hydrolysis of terminal non-reducing alpha-L-arabinofuranoside residues in alpha-L-arabinosides.. It functions in the pathway glycan metabolism; L-arabinan degradation. Its function is as follows. Involved in the degradation of arabinan and is a key enzyme in the complete degradation of the plant cell wall. Catalyzes the cleavage of terminal alpha-(1-&gt;5)-arabinofuranosyl bonds in small oligosaccharides as alpha-(1-&gt;5)-linked arabinobiose/arabinotriose, but does not display significant activity against linear non-substituted arabinan. It is also highly efficient in the cleavage of alpha-(1-&gt;3)-linked arabinoside of xylobiose and of the alpha-(1-&gt;3)-linked arabinoside decorations of polymeric wheat arabinoxylan. It exhibits very low activity against sugar beet arabinan. This chain is Intracellular exo-alpha-(1-&gt;5)-L-arabinofuranosidase, found in Acetivibrio thermocellus (strain ATCC 27405 / DSM 1237 / JCM 9322 / NBRC 103400 / NCIMB 10682 / NRRL B-4536 / VPI 7372) (Clostridium thermocellum).